A 330-amino-acid polypeptide reads, in one-letter code: Ketol-acid reductoisomerase (NADP(+)) (330 aa).

The KARI N-terminal Rossmann domain occupies 3–184; the sequence is LPVYYDKDID…GGGRMGVLET (182 aa). Residues 26–29, S52, and S54 each bind NADP(+); that span reads YGVQ. The active site involves H109. Position 135 (G135) interacts with NADP(+). The KARI C-terminal knotted domain maps to 185 to 329; that stretch reads SFKEECESDL…EILRAPFNHK (145 aa). Mg(2+) contacts are provided by D193, E197, E229, and E233. A substrate-binding site is contributed by S254.

It belongs to the ketol-acid reductoisomerase family. Requires Mg(2+) as cofactor.

The enzyme catalyses (2R)-2,3-dihydroxy-3-methylbutanoate + NADP(+) = (2S)-2-acetolactate + NADPH + H(+). The catalysed reaction is (2R,3R)-2,3-dihydroxy-3-methylpentanoate + NADP(+) = (S)-2-ethyl-2-hydroxy-3-oxobutanoate + NADPH + H(+). Its pathway is amino-acid biosynthesis; L-isoleucine biosynthesis; L-isoleucine from 2-oxobutanoate: step 2/4. It functions in the pathway amino-acid biosynthesis; L-valine biosynthesis; L-valine from pyruvate: step 2/4. Its function is as follows. Involved in the biosynthesis of branched-chain amino acids (BCAA). Catalyzes an alkyl-migration followed by a ketol-acid reduction of (S)-2-acetolactate (S2AL) to yield (R)-2,3-dihydroxy-isovalerate. In the isomerase reaction, S2AL is rearranged via a Mg-dependent methyl migration to produce 3-hydroxy-3-methyl-2-ketobutyrate (HMKB). In the reductase reaction, this 2-ketoacid undergoes a metal-dependent reduction by NADPH to yield (R)-2,3-dihydroxy-isovalerate. This is Ketol-acid reductoisomerase (NADP(+)) from Helicobacter pylori (strain J99 / ATCC 700824) (Campylobacter pylori J99).